Here is a 223-residue protein sequence, read N- to C-terminus: Deoxyribose-phosphate aldolase (223 aa).

Asp-91 acts as the Proton donor/acceptor in catalysis. Residue Lys-153 is the Schiff-base intermediate with acetaldehyde of the active site. The Proton donor/acceptor role is filled by Lys-182.

Belongs to the DeoC/FbaB aldolase family. DeoC type 1 subfamily.

It is found in the cytoplasm. The enzyme catalyses 2-deoxy-D-ribose 5-phosphate = D-glyceraldehyde 3-phosphate + acetaldehyde. Its pathway is carbohydrate degradation; 2-deoxy-D-ribose 1-phosphate degradation; D-glyceraldehyde 3-phosphate and acetaldehyde from 2-deoxy-alpha-D-ribose 1-phosphate: step 2/2. Its function is as follows. Catalyzes a reversible aldol reaction between acetaldehyde and D-glyceraldehyde 3-phosphate to generate 2-deoxy-D-ribose 5-phosphate. The polypeptide is Deoxyribose-phosphate aldolase (Streptococcus pyogenes serotype M1).